Reading from the N-terminus, the 234-residue chain is Phosphoribosylformylglycinamidine synthase subunit PurQ (234 aa).

The 230-residue stretch at 5 to 234 (TVGIVVFPGS…ESLFAHLAGA (230 aa)) folds into the Glutamine amidotransferase type-1 domain. The active-site Nucleophile is the Cys-89. Catalysis depends on residues His-206 and Glu-208.

As to quaternary structure, part of the FGAM synthase complex composed of 1 PurL, 1 PurQ and 2 PurS subunits.

It is found in the cytoplasm. The catalysed reaction is N(2)-formyl-N(1)-(5-phospho-beta-D-ribosyl)glycinamide + L-glutamine + ATP + H2O = 2-formamido-N(1)-(5-O-phospho-beta-D-ribosyl)acetamidine + L-glutamate + ADP + phosphate + H(+). It catalyses the reaction L-glutamine + H2O = L-glutamate + NH4(+). It participates in purine metabolism; IMP biosynthesis via de novo pathway; 5-amino-1-(5-phospho-D-ribosyl)imidazole from N(2)-formyl-N(1)-(5-phospho-D-ribosyl)glycinamide: step 1/2. In terms of biological role, part of the phosphoribosylformylglycinamidine synthase complex involved in the purines biosynthetic pathway. Catalyzes the ATP-dependent conversion of formylglycinamide ribonucleotide (FGAR) and glutamine to yield formylglycinamidine ribonucleotide (FGAM) and glutamate. The FGAM synthase complex is composed of three subunits. PurQ produces an ammonia molecule by converting glutamine to glutamate. PurL transfers the ammonia molecule to FGAR to form FGAM in an ATP-dependent manner. PurS interacts with PurQ and PurL and is thought to assist in the transfer of the ammonia molecule from PurQ to PurL. The polypeptide is Phosphoribosylformylglycinamidine synthase subunit PurQ (Chlorobaculum tepidum (strain ATCC 49652 / DSM 12025 / NBRC 103806 / TLS) (Chlorobium tepidum)).